The following is a 116-amino-acid chain: Iron-sulfur cluster insertion protein ErpA (116 aa).

Residues Cys-44, Cys-108, and Cys-110 each coordinate iron-sulfur cluster.

The protein belongs to the HesB/IscA family. As to quaternary structure, homodimer. Iron-sulfur cluster serves as cofactor.

In terms of biological role, required for insertion of 4Fe-4S clusters for at least IspG. This is Iron-sulfur cluster insertion protein ErpA from Pseudomonas syringae pv. syringae (strain B728a).